The primary structure comprises 241 residues: Glutamate/aspartate import ATP-binding protein GltL (241 aa).

Residues 2-236 (ITLKNVSKWY…PKSDRAKDFL (235 aa)) enclose the ABC transporter domain. 34–41 (GPSGSGKS) contacts ATP.

This sequence belongs to the ABC transporter superfamily. The complex is composed of two ATP-binding proteins (GltL), two transmembrane proteins (GltJ and GltK) and a solute-binding protein (GltI).

It localises to the cell inner membrane. It catalyses the reaction a polar amino acid(out) + ATP + H2O = a polar amino acid(in) + ADP + phosphate + H(+). It carries out the reaction L-glutamate(out) + ATP + H2O = L-glutamate(in) + ADP + phosphate + H(+). The enzyme catalyses L-aspartate(out) + ATP + H2O = L-aspartate(in) + ADP + phosphate + H(+). Functionally, part of the ABC transporter complex GltIJKL involved in glutamate and aspartate uptake. Probably responsible for energy coupling to the transport system. This chain is Glutamate/aspartate import ATP-binding protein GltL (gltL), found in Escherichia coli O157:H7.